Here is a 715-residue protein sequence, read N- to C-terminus: Protein Hook homolog 1 (715 aa).

Residues 6–122 (TVLCESLIIW…RLLQLILGCA (117 aa)) enclose the Calponin-homology (CH) domain. Coiled coils occupy residues 167–434 (AGDT…DQLL) and 463–656 (IRLQ…EEKL).

Belongs to the hook family. Interacts with microtubules.

The protein resides in the cytoplasm. Its subcellular location is the cytoskeleton. In terms of biological role, may function to promote vesicle trafficking and/or fusion. In Danio rerio (Zebrafish), this protein is Protein Hook homolog 1 (hook1).